Reading from the N-terminus, the 347-residue chain is GTP 3',8-cyclase (347 aa).

Residues 10 to 242 (RLNRPIGVLR…ERINARWPLE (233 aa)) enclose the Radical SAM core domain. GTP is bound at residue Arg-19. Cys-26 and Cys-30 together coordinate [4Fe-4S] cluster. Tyr-32 serves as a coordination point for S-adenosyl-L-methionine. Cys-33 contacts [4Fe-4S] cluster. Arg-65 contacts GTP. Gly-69 contributes to the S-adenosyl-L-methionine binding site. Residue Thr-104 participates in GTP binding. Residue Ser-129 coordinates S-adenosyl-L-methionine. A GTP-binding site is contributed by Lys-178. Residue Met-212 coordinates S-adenosyl-L-methionine. Residues Cys-275 and Cys-278 each contribute to the [4Fe-4S] cluster site. 280–282 (RLR) contributes to the GTP binding site. Cys-292 lines the [4Fe-4S] cluster pocket.

The protein belongs to the radical SAM superfamily. MoaA family. In terms of assembly, monomer and homodimer. The cofactor is [4Fe-4S] cluster.

It carries out the reaction GTP + AH2 + S-adenosyl-L-methionine = (8S)-3',8-cyclo-7,8-dihydroguanosine 5'-triphosphate + 5'-deoxyadenosine + L-methionine + A + H(+). Its pathway is cofactor biosynthesis; molybdopterin biosynthesis. Functionally, catalyzes the cyclization of GTP to (8S)-3',8-cyclo-7,8-dihydroguanosine 5'-triphosphate. The polypeptide is GTP 3',8-cyclase (Synechococcus sp. (strain CC9605)).